Here is a 541-residue protein sequence, read N- to C-terminus: Chaperonin GroEL (541 aa).

Residues 29–32, Lys50, 86–90, Gly416, and Asp498 contribute to the ATP site; these read TAGP and DGTTT.

It belongs to the chaperonin (HSP60) family. As to quaternary structure, forms a cylinder of 14 subunits composed of two heptameric rings stacked back-to-back. Interacts with the co-chaperonin GroES.

Its subcellular location is the cytoplasm. It catalyses the reaction ATP + H2O + a folded polypeptide = ADP + phosphate + an unfolded polypeptide.. In terms of biological role, together with its co-chaperonin GroES, plays an essential role in assisting protein folding. The GroEL-GroES system forms a nano-cage that allows encapsulation of the non-native substrate proteins and provides a physical environment optimized to promote and accelerate protein folding. The sequence is that of Chaperonin GroEL from Anaplasma phagocytophilum (Ehrlichia phagocytophila).